Here is a 59-residue protein sequence, read N- to C-terminus: Large ribosomal subunit protein bL32 (59 aa).

Belongs to the bacterial ribosomal protein bL32 family.

The protein is Large ribosomal subunit protein bL32 of Polynucleobacter necessarius subsp. necessarius (strain STIR1).